We begin with the raw amino-acid sequence, 421 residues long: O-glycosyltransferase braB (421 aa).

The disordered stretch occupies residues 1 to 26 (MVPSVMEGAPQLGITSTDTSSAGVPP). Polar residues predominate over residues 13–22 (GITSTDTSSA).

Belongs to the afumC glycosyltransferase family.

It participates in secondary metabolite biosynthesis. In terms of biological role, O-glycosyltransferase; part of the gene cluster that mediates the biosynthesis of the brasilane terpene glycosides brasilane D and E. The biosynthesis starts with the activity of the terpene cyclase braA that converts farnesyl pyrophosphate into the sesquiterpene alcohol trichobrasilenol. Subsequently, trichobrasilenol is glycosylated by the O-glycosyltransferase braB putatively using UDP-GlcNAc as sugar donor to yield brasilane A. The latter then undergoes two rounds of oxidation performed by the cytochrome P450 monooxygenase braC. In the first round braC hydroxylates C-12 forming brasilane D, which serves as substrate in the second round to establish the epoxide at the bond between C-5 and C-10 and oxidize the alcohol at C-12 to an aldehyde leading to the final product brasilane E. BraB is also able to glycosylate geraniol, linalool, perillyl alcohol, 3,4-dichlorophenol and, to a lesser extend, benzyl alcohol. In Annulohypoxylon truncatum (Hypoxylon truncatum), this protein is O-glycosyltransferase braB.